The chain runs to 251 residues: Vitamin B12 import ATP-binding protein BtuD (251 aa).

Residues 2-236 enclose the ABC transporter domain; the sequence is IRVNSLQVDS…EVLQSVFGTS (235 aa). 30 to 37 contributes to the ATP binding site; the sequence is GPNGCGKS.

The protein belongs to the ABC transporter superfamily. Vitamin B12 importer (TC 3.A.1.13.1) family. In terms of assembly, the complex is composed of two ATP-binding proteins (BtuD), two transmembrane proteins (BtuC) and a solute-binding protein (BtuF).

It localises to the cell inner membrane. It catalyses the reaction an R-cob(III)alamin(out) + ATP + H2O = an R-cob(III)alamin(in) + ADP + phosphate + H(+). Its function is as follows. Part of the ABC transporter complex BtuCDF involved in vitamin B12 import. Responsible for energy coupling to the transport system. The chain is Vitamin B12 import ATP-binding protein BtuD from Vibrio cholerae serotype O1 (strain ATCC 39541 / Classical Ogawa 395 / O395).